Consider the following 353-residue polypeptide: Rhodopsin (353 aa).

Topologically, residues 1 to 36 (MNGTEGPYFYVPMVNTSGIVRSPYEYPQYYLVNPAA) are extracellular. N-linked (GlcNAc...) asparagine glycosylation is found at Asn-2 and Asn-15. The chain crosses the membrane as a helical span at residues 37–61 (YARLGAYMFLLILVGFPINFLTLYV). The Cytoplasmic segment spans residues 62–73 (TIEHKKLRTPLN). Residues 74–96 (YILLNLAVADLFMVFGGFTTTMY) form a helical membrane-spanning segment. At 97 to 110 (TSMHGYFVLGRLGC) the chain is on the extracellular side. Cys-110 and Cys-187 are disulfide-bonded. A helical transmembrane segment spans residues 111–133 (NIEGFFATLGGEIALWSLVVLAI). Positions 134–136 (ERW) match the 'Ionic lock' involved in activated form stabilization motif. The Cytoplasmic segment spans residues 134–152 (ERWVVVCKPISNFRFGENH). Residues 153 to 173 (AIMGLAFTWLMALACAAPPLV) traverse the membrane as a helical segment. Residues 174–202 (GWSRYIPEGMQCSCGIDYYTRAEGFNNES) are Extracellular-facing. N-linked (GlcNAc...) asparagine glycosylation occurs at Asn-200. The chain crosses the membrane as a helical span at residues 203 to 224 (FVIYMFVCHFTVPLMVVFFCYG). The Cytoplasmic segment spans residues 225-252 (RLLCAVKEAAAAQQESETTQRAEREVTR). The chain crosses the membrane as a helical span at residues 253–274 (MVIMMVVAFLVCWLPYASVAWW). At 275-286 (IFTHQGSEFGPV) the chain is on the extracellular side. Residues 287–308 (FMTIPAFFAKSSSIYNPMIYIC) form a helical membrane-spanning segment. Lys-296 carries the N6-(retinylidene)lysine modification. The Cytoplasmic portion of the chain corresponds to 309–353 (LNKQFRHCMITTLCCGKNPFEEEEGASTASKTEASSVSSSSVSPA). 2 S-palmitoyl cysteine lipidation sites follow: Cys-322 and Cys-323. Positions 331–353 (EEGASTASKTEASSVSSSSVSPA) are disordered. Over residues 334-353 (ASTASKTEASSVSSSSVSPA) the composition is skewed to low complexity.

This sequence belongs to the G-protein coupled receptor 1 family. Opsin subfamily. Post-translationally, phosphorylated on some or all of the serine and threonine residues present in the C-terminal region. Contains one covalently linked retinal chromophore.

It localises to the membrane. The protein localises to the cell projection. It is found in the cilium. The protein resides in the photoreceptor outer segment. In terms of biological role, photoreceptor required for image-forming vision at low light intensity. While most salt water fish species use retinal as chromophore, most freshwater fish use 3-dehydroretinal, or a mixture of retinal and 3-dehydroretinal. Light-induced isomerization of 11-cis to all-trans retinal triggers a conformational change that activates signaling via G-proteins. Subsequent receptor phosphorylation mediates displacement of the bound G-protein alpha subunit by arrestin and terminates signaling. The protein is Rhodopsin (rho) of Sarpa salpa (Salema).